A 423-amino-acid chain; its full sequence is MLVKADMTKDIAQVMAEVGRKAKAAAAPLSIATSEQKNKALNAAADAILEARADILEANRLDLANAEKNGMAASFVDRLTLNEARIDAIAEGIRAIATLPDPVGEVIAEWDRPNGLHIERVRTPLGVIGVIYESRPNVTADAGALCLKAGNAVILRGGSDSAHSSAAIHKALEAANLPADAIQIVPVTDRAAVGEMLKGLGGAIDVIVPRGGKSLVARVQSEARVPVFAHLEGICHLYIDKSADLDMARRIALDAKMRRTGICGAAETLLVDRAVASTHLAPILGDLAAGGCEIRGSAEVLALYPAAKPATEEDWSTEYLDAIISVALVDGISGAIDHINRYSSHHTEAIVAEDAQTVARFFNEIDSAILLHNASTQFADGGEFGMGAEIGIATGKMHARGPVGVEQLTSFKYRVRGSGQVRG.

This sequence belongs to the gamma-glutamyl phosphate reductase family.

Its subcellular location is the cytoplasm. The enzyme catalyses L-glutamate 5-semialdehyde + phosphate + NADP(+) = L-glutamyl 5-phosphate + NADPH + H(+). The protein operates within amino-acid biosynthesis; L-proline biosynthesis; L-glutamate 5-semialdehyde from L-glutamate: step 2/2. In terms of biological role, catalyzes the NADPH-dependent reduction of L-glutamate 5-phosphate into L-glutamate 5-semialdehyde and phosphate. The product spontaneously undergoes cyclization to form 1-pyrroline-5-carboxylate. In Brucella suis (strain ATCC 23445 / NCTC 10510), this protein is Gamma-glutamyl phosphate reductase.